Reading from the N-terminus, the 464-residue chain is Trigger factor (464 aa).

Residues 162–243 (GDFVSIDLSA…VKSVKERELP (82 aa)) form the PPIase FKBP-type domain. The interval 431 to 464 (IDTSEFFGKRPSGDGAADEDADQADESTTADAGE) is disordered. Positions 446–455 (AADEDADQAD) are enriched in acidic residues.

This sequence belongs to the FKBP-type PPIase family. Tig subfamily.

It localises to the cytoplasm. The catalysed reaction is [protein]-peptidylproline (omega=180) = [protein]-peptidylproline (omega=0). Its function is as follows. Involved in protein export. Acts as a chaperone by maintaining the newly synthesized protein in an open conformation. Functions as a peptidyl-prolyl cis-trans isomerase. This is Trigger factor from Mycobacterium avium (strain 104).